Reading from the N-terminus, the 77-residue chain is MARRGRPKRRKVCYFTVNKIEKIDYKDVDLLKKFVSERGKILPRRVTGTSAKYQRQLTTAIKRARQIALLPYVTDNN.

This sequence belongs to the bacterial ribosomal protein bS18 family. In terms of assembly, part of the 30S ribosomal subunit. Forms a tight heterodimer with protein bS6.

Binds as a heterodimer with protein bS6 to the central domain of the 16S rRNA, where it helps stabilize the platform of the 30S subunit. This Halalkalibacterium halodurans (strain ATCC BAA-125 / DSM 18197 / FERM 7344 / JCM 9153 / C-125) (Bacillus halodurans) protein is Small ribosomal subunit protein bS18.